The primary structure comprises 459 residues: Vanillin aminotransferase (459 aa).

Residues 115-116 and Asp-255 contribute to the pyridoxal 5'-phosphate site; that span reads GS. Position 284 is an N6-(pyridoxal phosphate)lysine (Lys-284). Residue 320-321 coordinates pyridoxal 5'-phosphate; the sequence is FT. A coiled-coil region spans residues 428–459; it reads LSLEELDELIRIYGKALKDTEKRVEELKSQKK.

The protein belongs to the class-III pyridoxal-phosphate-dependent aminotransferase family. In terms of tissue distribution, expressed in placental tissue of immature fruit.

It catalyses the reaction vanillin + L-alanine = vanillylamine + pyruvate. It functions in the pathway aromatic compound metabolism; phenylpropanoid biosynthesis. Involved in the biosynthesis of capsaicinoids natural products, pungent alkaloids synthesized from phenylpropanoid intermediates in the placental tissue of chili pepper fruit acting as repellant on herbivorous mammals and conferring spiciness to hot peppers. Can transfer an amine from vanillylamine to pyruvate forming vanillin and L-alanine. Can use pyruvate or oxaloacetate, but not 2-oxoglutarate as amino group acceptors. Is able to convert (S)-1-phenylethylamine into acetophenone in vitro. This Capsicum chinense (Scotch bonnet) protein is Vanillin aminotransferase.